Here is a 310-residue protein sequence, read N- to C-terminus: tRNA dimethylallyltransferase (310 aa).

14–21 (GPTASGKT) provides a ligand contact to ATP. Position 16-21 (16-21 (TASGKT)) interacts with substrate. The segment at 39–42 (DSMQ) is interaction with substrate tRNA.

This sequence belongs to the IPP transferase family. In terms of assembly, monomer. It depends on Mg(2+) as a cofactor.

It carries out the reaction adenosine(37) in tRNA + dimethylallyl diphosphate = N(6)-dimethylallyladenosine(37) in tRNA + diphosphate. Functionally, catalyzes the transfer of a dimethylallyl group onto the adenine at position 37 in tRNAs that read codons beginning with uridine, leading to the formation of N6-(dimethylallyl)adenosine (i(6)A). The chain is tRNA dimethylallyltransferase from Corynebacterium jeikeium (strain K411).